The primary structure comprises 252 residues: Uridylate kinase (252 aa).

23-26 (KLSG) is an ATP binding site. G65 contacts UMP. ATP is bound by residues G66 and R70. UMP-binding positions include D85 and 146–153 (LGAPFFST). 4 residues coordinate ATP: T173, Q174, Y179, and D182.

Belongs to the UMP kinase family. Homohexamer.

It localises to the cytoplasm. It catalyses the reaction UMP + ATP = UDP + ADP. The protein operates within pyrimidine metabolism; CTP biosynthesis via de novo pathway; UDP from UMP (UMPK route): step 1/1. Inhibited by UTP. In terms of biological role, catalyzes the reversible phosphorylation of UMP to UDP. This chain is Uridylate kinase, found in Thermobifida fusca (strain YX).